Here is a 123-residue protein sequence, read N- to C-terminus: Small ribosomal subunit protein uS13 (123 aa).

Residues 92–123 (HRRGLPVRGQKTKTNARTRKGPKKLVVSRKKK) are disordered.

The protein belongs to the universal ribosomal protein uS13 family. In terms of assembly, part of the 30S ribosomal subunit. Forms a loose heterodimer with protein S19. Forms two bridges to the 50S subunit in the 70S ribosome.

Its function is as follows. Located at the top of the head of the 30S subunit, it contacts several helices of the 16S rRNA. In the 70S ribosome it contacts the 23S rRNA (bridge B1a) and protein L5 of the 50S subunit (bridge B1b), connecting the 2 subunits; these bridges are implicated in subunit movement. Contacts the tRNAs in the A and P-sites. The protein is Small ribosomal subunit protein uS13 of Clostridium tetani (strain Massachusetts / E88).